Consider the following 387-residue polypeptide: EARP-interacting protein homolog (387 aa).

WD repeat units follow at residues 132–172 (SAHG…AKAT), 182–222 (KGQL…QIYC), 226–266 (AHGQ…EPVK), and 270–310 (EHSH…SEPF). The disordered stretch occupies residues 309–337 (PFGHLVDDDDLSDPEENQQEDKGKEPLQD). Over residues 315–326 (DDDDLSDPEENQ) the composition is skewed to acidic residues. Residues 345-385 (EHEDSVYAVEWSAADPWLFASLSYDGRLVINRVPRALKYRI) form a WD 5 repeat.

This sequence belongs to the WD repeat EIPR1 family.

Its subcellular location is the golgi apparatus. It localises to the trans-Golgi network. In terms of biological role, may act as a component of endosomal retrieval machinery that is involved in protein transport from early endosomes to either recycling endosomes or the trans-Golgi network. In Danio rerio (Zebrafish), this protein is EARP-interacting protein homolog.